Here is a 394-residue protein sequence, read N- to C-terminus: Gap junction gamma-1 protein (394 aa).

Over 1–22 (MSWSFLTRLLEEIHNHSTFVGK) the chain is Cytoplasmic. A helical membrane pass occupies residues 23–45 (IWLSVLIVFRIVLTAVGGESIYY). Topologically, residues 46 to 75 (DEQSKFVCNTEQPGCENVCYDAFAPLSHVR) are extracellular. The helical transmembrane segment at 76-95 (FWVFQIILVATPSVMYLGYA) threads the bilayer. Residues 96–176 (IHKIARMVEH…RRIREDGLMR (81 aa)) lie on the Cytoplasmic side of the membrane. The chain crosses the membrane as a helical span at residues 177 to 199 (IYVLQLLVRATFEVGFLIGQYLL). Over 200 to 229 (YGFEVSPVFVCSRKPCPHKIDCFISRPTEK) the chain is Extracellular. Residues 230–252 (TIFLLIMYGVSCMCLLLNVWEML) traverse the membrane as a helical segment. Over 253 to 394 (HLGFGTIRDT…SGDGKNSVWI (142 aa)) the chain is Cytoplasmic. Residues 354–394 (IQAYNNQNNPGSSSREKKSKAGSNKSSASSKSGDGKNSVWI) form a disordered region. A compositionally biased stretch (polar residues) spans 356–366 (AYNNQNNPGSS). Low complexity predominate over residues 374–394 (AGSNKSSASSKSGDGKNSVWI).

It belongs to the connexin family. Gamma-type subfamily. In terms of assembly, a connexon is composed of a hexamer of connexins. In terms of tissue distribution, mostly in heart and stomach.

Its subcellular location is the cell membrane. The protein localises to the cell junction. The protein resides in the gap junction. Functionally, one gap junction consists of a cluster of closely packed pairs of transmembrane channels, the connexons, through which materials of low MW diffuse from one cell to a neighboring cell. This chain is Gap junction gamma-1 protein (GJC1), found in Gallus gallus (Chicken).